The chain runs to 128 residues: Small ribosomal subunit protein uS9c (128 aa).

Residues 106–128 form a disordered region; the sequence is SRIKERKKYGLKKARKAPQFSKR. The segment covering 109 to 128 has biased composition (basic residues); sequence KERKKYGLKKARKAPQFSKR.

This sequence belongs to the universal ribosomal protein uS9 family.

The protein resides in the plastid. It localises to the chloroplast. This chain is Small ribosomal subunit protein uS9c (rps9), found in Cyanidium caldarium (Red alga).